The following is a 286-amino-acid chain: Bifunctional protein FolD (286 aa).

NADP(+)-binding positions include 166–168 and Ile232; that span reads GAS.

This sequence belongs to the tetrahydrofolate dehydrogenase/cyclohydrolase family. In terms of assembly, homodimer.

It catalyses the reaction (6R)-5,10-methylene-5,6,7,8-tetrahydrofolate + NADP(+) = (6R)-5,10-methenyltetrahydrofolate + NADPH. The catalysed reaction is (6R)-5,10-methenyltetrahydrofolate + H2O = (6R)-10-formyltetrahydrofolate + H(+). Its pathway is one-carbon metabolism; tetrahydrofolate interconversion. Catalyzes the oxidation of 5,10-methylenetetrahydrofolate to 5,10-methenyltetrahydrofolate and then the hydrolysis of 5,10-methenyltetrahydrofolate to 10-formyltetrahydrofolate. The polypeptide is Bifunctional protein FolD (Vibrio campbellii (strain ATCC BAA-1116)).